The chain runs to 313 residues: Porphobilinogen deaminase (313 aa).

Cysteine 242 is subject to S-(dipyrrolylmethanemethyl)cysteine.

This sequence belongs to the HMBS family. As to quaternary structure, monomer. Dipyrromethane serves as cofactor.

The enzyme catalyses 4 porphobilinogen + H2O = hydroxymethylbilane + 4 NH4(+). It functions in the pathway porphyrin-containing compound metabolism; protoporphyrin-IX biosynthesis; coproporphyrinogen-III from 5-aminolevulinate: step 2/4. In terms of biological role, tetrapolymerization of the monopyrrole PBG into the hydroxymethylbilane pre-uroporphyrinogen in several discrete steps. This chain is Porphobilinogen deaminase, found in Pectobacterium atrosepticum (strain SCRI 1043 / ATCC BAA-672) (Erwinia carotovora subsp. atroseptica).